A 238-amino-acid chain; its full sequence is tRNA (guanine-N(7)-)-methyltransferase (238 aa).

Residues E68, E93, D120, and D143 each coordinate S-adenosyl-L-methionine. D143 is an active-site residue. Residues K147, D179, and 216 to 219 (TKFE) contribute to the substrate site.

It belongs to the class I-like SAM-binding methyltransferase superfamily. TrmB family.

The catalysed reaction is guanosine(46) in tRNA + S-adenosyl-L-methionine = N(7)-methylguanosine(46) in tRNA + S-adenosyl-L-homocysteine. Its pathway is tRNA modification; N(7)-methylguanine-tRNA biosynthesis. Functionally, catalyzes the formation of N(7)-methylguanine at position 46 (m7G46) in tRNA. The protein is tRNA (guanine-N(7)-)-methyltransferase of Shewanella denitrificans (strain OS217 / ATCC BAA-1090 / DSM 15013).